The sequence spans 318 residues: Glycine--tRNA ligase alpha subunit (318 aa).

This sequence belongs to the class-II aminoacyl-tRNA synthetase family. As to quaternary structure, tetramer of two alpha and two beta subunits.

The protein localises to the cytoplasm. The catalysed reaction is tRNA(Gly) + glycine + ATP = glycyl-tRNA(Gly) + AMP + diphosphate. In Saccharophagus degradans (strain 2-40 / ATCC 43961 / DSM 17024), this protein is Glycine--tRNA ligase alpha subunit.